Consider the following 886-residue polypeptide: METRSKLMLLACATFSIISLVKSQNQQGFISLYCGLPSNESPYIEPLTNLTYISDVNFVRGGKTGNIKNNSDIDFTSRPYKVLRYFPEGIRNCYSLSVKQGTKYLIRTLFFYGNYDGLNTSPRFDLFLGPNIWTSVDVQKVDGGDGVIEEIIHVTRCNILDICLVKTGTTTPMISAIELRPLRYDTYTARTGSLKKILHFYFTNSGKEVRYPEDVYDRVWIPHSQPEWTQINTTRNVSGFSDGYNPPQDVIKTASIPTNVSEPLTFTWMSESSDDETYAYLYFAEIQQLKANETRQFKILVNGVYYIDYIPRKFEAETLITPAALKCGGGVCRVQLSKTPKSTLPPQMNAIEIFSVIQFPQSDTNTDEVIAIKNIQSTYKVSRISWQGDPCVPIQFSWMGVSCNVIDISTPPRIISLDLSSSGLTGVITPSIQNLTMLRELDLSNNNLTGVIPPSLQNLTMLRELDLSNNNLTGEVPEFLATIKPLLVIHLRGNNLRGSVPQALQDRENNDGLKLLRGKHQPKSWLVAIVASISCVAVTIIVLVLIFIFRRRKSSTRKVIRPSLEMKNRRFKYSEVKEMTNNFEVVLGKGGFGVVYHGFLNNEQVAVKVLSQSSTQGYKEFKTEVELLLRVHHVNLVSLVGYCDKGNDLALIYEFMENGNLKEHLSGKRGGPVLNWPGRLKIAIESALGIEYLHIGCKPPMVHRDVKSTNILLGLRFEAKLADFGLSRSFLVGSQTHVSTNVAGTLGYLDPEYYQKNWLTEKSDVYSFGIVLLEIITGQPVIEQSRDKSYIVEWAKSMLANGDIESIMDRNLHQDYDTSSSWKALELAMLCINPSSTLRPNMTRVAHELNECLEIYNLTKRRSQDQNSSKSSGHTVTFISDIPSAR.

The N-terminal stretch at 1–23 (METRSKLMLLACATFSIISLVKS) is a signal peptide. Residues 24-528 (QNQQGFISLY…KHQPKSWLVA (505 aa)) lie on the Extracellular side of the membrane. N-linked (GlcNAc...) asparagine glycans are attached at residues Asn-49, Asn-69, Asn-232, Asn-236, Asn-259, Asn-292, Asn-434, Asn-447, Asn-458, and Asn-471. LRR repeat units lie at residues 413 to 436 (RIIS…QNLT), 437 to 460 (MLRE…QNLT), 461 to 483 (MLRE…LATI), and 485 to 507 (PLLV…LQDR). The helical transmembrane segment at 529–549 (IVASISCVAVTIIVLVLIFIF) threads the bilayer. Residues 550-886 (RRRKSSTRKV…TFISDIPSAR (337 aa)) are Cytoplasmic-facing. Residues 581-850 (NNFEVVLGKG…NMTRVAHELN (270 aa)) form the Protein kinase domain. Residues 587–595 (LGKGGFGVV) and Lys-608 contribute to the ATP site. Residue Tyr-653 is modified to Phosphotyrosine. The Proton acceptor role is filled by Asp-705. Residue Ser-739 is modified to Phosphoserine. Phosphothreonine is present on residues Thr-740 and Thr-745. Residue Tyr-753 is modified to Phosphotyrosine. The tract at residues 863–886 (SQDQNSSKSSGHTVTFISDIPSAR) is disordered. A compositionally biased stretch (polar residues) spans 865 to 878 (DQNSSKSSGHTVTF).

This sequence belongs to the protein kinase superfamily. Ser/Thr protein kinase family.

It is found in the cell membrane. The enzyme catalyses L-seryl-[protein] + ATP = O-phospho-L-seryl-[protein] + ADP + H(+). The catalysed reaction is L-threonyl-[protein] + ATP = O-phospho-L-threonyl-[protein] + ADP + H(+). This is Putative leucine-rich repeat receptor-like serine/threonine-protein kinase At2g14440 from Arabidopsis thaliana (Mouse-ear cress).